Reading from the N-terminus, the 366-residue chain is Aminomethyltransferase (366 aa).

It belongs to the GcvT family. As to quaternary structure, the glycine cleavage system is composed of four proteins: P, T, L and H.

The enzyme catalyses N(6)-[(R)-S(8)-aminomethyldihydrolipoyl]-L-lysyl-[protein] + (6S)-5,6,7,8-tetrahydrofolate = N(6)-[(R)-dihydrolipoyl]-L-lysyl-[protein] + (6R)-5,10-methylene-5,6,7,8-tetrahydrofolate + NH4(+). Functionally, the glycine cleavage system catalyzes the degradation of glycine. The protein is Aminomethyltransferase of Bacillus cereus (strain G9842).